A 264-amino-acid chain; its full sequence is Glutamate racemase (264 aa).

Residues 10–11 (DS) and 42–43 (YG) contribute to the substrate site. Cys-73 functions as the Proton donor/acceptor in the catalytic mechanism. Residue 74–75 (NT) coordinates substrate. Cys-183 acts as the Proton donor/acceptor in catalysis. 184 to 185 (TH) provides a ligand contact to substrate.

The protein belongs to the aspartate/glutamate racemases family. In terms of assembly, homodimer.

It carries out the reaction L-glutamate = D-glutamate. It participates in cell wall biogenesis; peptidoglycan biosynthesis. In terms of biological role, provides the (R)-glutamate required for cell wall biosynthesis. This is Glutamate racemase from Streptococcus pyogenes serotype M1.